A 631-amino-acid polypeptide reads, in one-letter code: PTS system glucosamine-specific EIICBA component (631 aa).

Residues 3-382 (KKAFQILQQL…WNLKTPGRET (380 aa)) form the PTS EIIC type-1 domain. The next 8 helical transmembrane spans lie at 12–32 (LGRALMTPVAVLPAAGLLLRF), 56–76 (LIFAVGVAIGLAGGEGVAGLA), 106–126 (HLIDMGVFGGIIIGLLAAYLY), 149–169 (IITSVSSLVIGVIFSFVWPLI), 196–216 (LLIPFGLHHIFYTPFYFMMGE), 243–263 (FMMGDFPYMIFCLPAVALAII), 298–318 (FLFVAPVLYLINSILAGVIFV), and 350–370 (VVIPVGIVFAFIYYYLFRFAI). One can recognise a PTS EIIB type-1 domain in the interval 397 to 478 (DQLAFHVLQA…KTIMAGGVPA (82 aa)). Residue Cys419 is the Phosphocysteine intermediate; for EIIB activity of the active site. Cys419 is modified (phosphocysteine). The region spanning 515 to 619 (DQVFSEKMMG…SAITPVIFTN (105 aa)) is the PTS EIIA type-1 domain. His567 serves as the catalytic Tele-phosphohistidine intermediate; for EIIA activity. The residue at position 567 (His567) is a Phosphohistidine.

The protein localises to the cell membrane. It catalyses the reaction D-glucosamine(out) + N(pros)-phospho-L-histidyl-[protein] = D-glucosamine 6-phosphate(in) + L-histidyl-[protein]. Its function is as follows. The phosphoenolpyruvate-dependent sugar phosphotransferase system (sugar PTS), a major carbohydrate active transport system, catalyzes the phosphorylation of incoming sugar substrates concomitantly with their translocation across the cell membrane. This system is involved in glucosamine transport. In vitro, when expressed in the absence of GamR and NagP, can transport N-acetylglucosamine. In addition, plays an important role in the phosphorylation of EIIA-deficient PTS transporters. The EIIA domain can transfer a phosphoryl group to EIIA-deficient PTS transporters, enabling growth with maltose, N-acetylglucosamine, sucrose or trehalose as the sole carbon source. The chain is PTS system glucosamine-specific EIICBA component from Bacillus subtilis (strain 168).